The chain runs to 3926 residues: Protein bassoon (3926 aa).

Residues 1–161 (MGNEVSLEGG…PTSPYSVPQI (161 aa)) are disordered. Gly-2 carries N-myristoyl glycine lipidation. Pro residues-rich tracts occupy residues 15–30 (PLPP…PGPG) and 58–72 (PPVP…PGPG). A 5 X 2 AA tandem repeats of P-G region spans residues 23–32 (PGPGPGPGPG). The 7 X 2 AA tandem repeats of P-G stretch occupies residues 61-74 (PGPGPGPGPGPGPG). Polar residues-rich tracts occupy residues 90-105 (RAAS…TTPG) and 130-157 (QVDS…SPYS). Position 145 is a phosphoserine (Ser-145). An Omega-N-methylarginine modification is found at Arg-148. C4-type zinc fingers lie at residues 170–193 (CPIC…CTQC) and 198–220 (CNQC…CLNC). Disordered stretches follow at residues 231–343 (TTAP…EQTQ) and 366–459 (SVQP…KTMP). Residues 233 to 243 (APRSKSQQQLH) show a composition bias toward polar residues. A phosphoserine mark is found at Ser-244 and Ser-248. Residues 366–377 (SVQPEADTQGQP) are compositionally biased toward polar residues. 2 consecutive C4-type zinc fingers follow at residues 465–488 (CPLC…CTTC) and 493–515 (CNLC…CLNC). Disordered stretches follow at residues 524-927 (SLGE…LQGG) and 940-1248 (GSYG…AEGT). Positions 552 to 569 (PLKQKGPQGLGQPSGPLP) are enriched in low complexity. 3 tandem repeats follow at residues 571-577 (KASPLST), 578-584 (KASPLPS), and 585-591 (KASPQAK). The tract at residues 571–591 (KASPLSTKASPLPSKASPQAK) is 3 X 7 AA tandem repeats of K-A-S-P-[LQ]-[APS]-[KST]. Over residues 619–631 (MPKPPPETTPTPA) the composition is skewed to pro residues. Over residues 671-680 (QDASRSPQSL) the composition is skewed to polar residues. Positions 681–698 (SDTGYSSDGISSSQSEIT) are enriched in low complexity. Positions 771 to 787 (FDSDEELEDILEEDEDS) are enriched in acidic residues. The span at 788–797 (AEWRRRREQQ) shows a compositional bias: basic and acidic residues. The segment covering 851–862 (SAEEDNLEEDDT) has biased composition (acidic residues). Residue Arg-867 is modified to Omega-N-methylarginine. The residue at position 970 (Ser-970) is a Phosphoserine. The span at 984-1001 (PASTPSYTSGTSPTSLSS) shows a compositional bias: low complexity. Residues 1037-1092 (IEDSSEEEELREEEELLREQEKMREVEQQRIRSTARKTRRDKEELRAQRRRERSKT) adopt a coiled-coil conformation. Residues 1039–1052 (DSSEEEELREEEEL) show a composition bias toward acidic residues. Ser-1040 and Ser-1041 each carry phosphoserine. Over residues 1053–1066 (LREQEKMREVEQQR) the composition is skewed to basic and acidic residues. Phosphoserine is present on Ser-1090. Residue Thr-1092 is modified to Phosphothreonine. Phosphoserine occurs at positions 1098 and 1104. The segment covering 1107–1122 (EELRQAAEMEELHRSS) has biased composition (basic and acidic residues). Composition is skewed to low complexity over residues 1123–1133 (CSEYSPSPSLD) and 1163–1180 (SPTE…SGRP). The stretch at 1181–1208 (LKSAEEAYEEMMRKAELLQRQQGQAAGA) forms a coiled coil. Basic and acidic residues predominate over residues 1182 to 1197 (KSAEEAYEEMMRKAEL). Positions 1199 to 1209 (QRQQGQAAGAR) are enriched in low complexity. Ser-1226 carries the post-translational modification Phosphoserine. Positions 1276-1294 (RDLAFAEDKKKEKQFLNAE) form a coiled coil. Disordered regions lie at residues 1298 to 1547 (MDPM…RLVW) and 1570 to 1620 (RMVH…RVPS). A compositionally biased stretch (low complexity) spans 1322–1332 (SFSTPTSSDSS). A glycan (O-linked (GlcNAc) threonine) is linked at Thr-1343. Residues 1346–1355 (FAKETQDPLK) show a composition bias toward basic and acidic residues. Composition is skewed to low complexity over residues 1358–1367 (SSPASPSSAS) and 1377–1392 (GPGT…CPAG). Residue Thr-1384 is glycosylated (O-linked (GlcNAc) threonine). Over residues 1408 to 1434 (RSPSPSSTAHSYGHSPTTANYGSQTED) the composition is skewed to polar residues. Residues 1466–1493 (PSRAYSYFASSSPPLSPSSPSESPTFSP) are compositionally biased toward low complexity. Ser-1477, Ser-1486, and Ser-1488 each carry phosphoserine. Residues 1570–1598 (RMVHASASTSPLCSPTETQPTTHGYSQTT) show a composition bias toward polar residues. The segment covering 1606–1616 (PPEPPGPPGFP) has biased composition (pro residues). Residues Arg-1787 and Arg-1791 each carry the omega-N-methylarginine modification. At Arg-1801 the chain carries Asymmetric dimethylarginine; alternate. Arg-1801 carries the omega-N-methylarginine; alternate modification. Arg-1813 is modified (omega-N-methylarginine). A disordered region spans residues 1924 to 1978 (PEKSMADAAPPGQSSSPFYGPRDPEPPEPPTYRAQGVVGPGPHEEQRPYPQGLPG). Residues Ser-1985 and Ser-2041 each carry the phosphoserine modification. An omega-N-methylarginine mark is found at Arg-2046 and Arg-2076. 3 positions are modified to asymmetric dimethylarginine: Arg-2250, Arg-2260, and Arg-2266. The disordered stretch occupies residues 2287 to 2309 (AAKAPGAGGPSRPEMPVGAAREE). O-linked (GlcNAc) threonine glycosylation is present at Thr-2314. Over residues 2324–2341 (GAPAPAPLAGQKPPADAA) the composition is skewed to low complexity. Disordered stretches follow at residues 2324–2370 (GAPA…KQQE) and 2532–2568 (PSSA…ACEL). Positions 2351–2476 (RPGFEKEEAS…EEQKQRQKAP (126 aa)) form a coiled coil. Residues 2353–2370 (GFEKEEASQEERQRKQQE) show a composition bias toward basic and acidic residues. Over residues 2533–2543 (SSASDMSLQTE) the composition is skewed to polar residues. Ser-2570 carries the phosphoserine modification. Phosphothreonine occurs at positions 2587 and 2614. A disordered region spans residues 2601–2655 (RRRARRSADCSVQTDDEDSAEWEQPVRRRRSRLPRHSDSGSDSKHDATASSSSAA). Positions 2635 to 2647 (RHSDSGSDSKHDA) are enriched in basic and acidic residues. Residue Thr-2691 is glycosylated (O-linked (GlcNAc) threonine). An interaction with DAO region spans residues 2721 to 3268 (EPDGQAQGVA…PGSSGRPGKE (548 aa)). Residues Ser-2802, Ser-2851, and Ser-2857 each carry the phosphoserine modification. Residues 2845-2865 (TLQRSLSDPKPLSPTAEESAK) are disordered. O-linked (GlcNAc) threonine glycosylation is present at Thr-2936. A coiled-coil region spans residues 2939–2981 (SLLRELDRDLRLVEHESTKLRKKQAELDEEEKEIDAKLKYLEL). Phosphoserine is present on Ser-3013. Residues 3039-3055 (AAAPATPSGPTAFQQPR) are compositionally biased toward low complexity. 3 disordered regions span residues 3039–3375 (AAAP…FSPI), 3424–3551 (GMSS…PRAH), and 3572–3897 (EAYH…SVFS). A compositionally biased stretch (pro residues) spans 3083–3095 (YPGPSTYPAPAFP). Positions 3165–3176 (ASPVVPMSSAPS) are enriched in low complexity. A compositionally biased stretch (polar residues) spans 3205 to 3228 (SVSQSPAPTYPSDSHYTSLEQNVP). At Ser-3291 the chain carries Phosphoserine. Basic and acidic residues-rich tracts occupy residues 3321–3333 (GDSD…RVEK), 3363–3375 (QGME…FSPI), and 3465–3477 (GYER…ERLQ). Ser-3373 bears the Phosphoserine mark. At Arg-3492 the chain carries Omega-N-methylarginine. Basic and acidic residues-rich tracts occupy residues 3540 to 3551 (VQEHVKDGPRAH), 3583 to 3593 (WFDKPRDARSD), 3628 to 3647 (LWPH…EHRH), and 3657 to 3681 (HTGE…EARP). Residues 3703 to 3712 (AEYSQPSRAS) are compositionally biased toward polar residues. The span at 3741–3807 (PQAQPQLQGR…RLQQQSQPTT (67 aa)) shows a compositional bias: low complexity. Arg-3808 bears the Omega-N-methylarginine mark. 2 stretches are compositionally biased toward low complexity: residues 3849-3860 (AKAPQQGRAPQA) and 3882-3892 (GAPAGQPGADG).

As to quaternary structure, interacts with PCLO, ERC2/CAST1, RIMS1 and UNC13A. Interacts with TPRG1L. Interacts with DYNLL1 and DYNLL2; these interactions potentially link PTVs to dynein and myosin V motor complexes. Interacts with ATG5; this interaction is important for the regulation of presynaptic autophagy. Interacts (via C-terminus) with TRIO (via N-terminus). Interacts with CTBP1. Interacts with SIAH1; this interaction negatively regulates SIAH1 E3 ligase activity. Interacts (via coiled region) with DAO; the interaction is direct. Myristoylated. The N-terminal myristoylation is not sufficient for presynaptic localization. As to expression, exclusively expressed in brain.

The protein resides in the cytoplasm. Its subcellular location is the presynaptic active zone. It localises to the cytoskeleton. The protein localises to the cytoplasmic vesicle. It is found in the secretory vesicle. The protein resides in the synaptic vesicle membrane. Its function is as follows. Scaffold protein of the presynaptic cytomatrix at the active zone (CAZ) which is the place in the synapse where neurotransmitter is released. After synthesis, participates in the formation of Golgi-derived membranous organelles termed Piccolo-Bassoon transport vesicles (PTVs) that are transported along axons to sites of nascent synaptic contacts. At the presynaptic active zone, regulates the spatial organization of synaptic vesicle cluster, the protein complexes that execute membrane fusion and compensatory endocytosis. Also functions in processes other than assembly such as the regulation of specific presynaptic protein ubiquitination by interacting with SIAH1 or the regulation of presynaptic autophagy by associating with ATG5. Also mediates synapse to nucleus communication leading to reconfiguration of gene expression by associating with the transcriptional corepressor CTBP1 and by subsequently reducing the size of its pool available for nuclear import. Inhibits the activity of the proportion of DAO enzyme that localizes to the presynaptic active zone, which may modulate synaptic transmission. The sequence is that of Protein bassoon from Homo sapiens (Human).